A 90-amino-acid polypeptide reads, in one-letter code: Protein S100-A6 (90 aa).

2 EF-hand domains span residues 12–47 and 48–83; these read LIGI…IGSK and LQDA…LAMI. Residues threonine 28 and glutamate 33 each contribute to the Ca(2+) site. An N6-acetyllysine modification is found at lysine 40. At serine 46 the chain carries Phosphoserine. Lysine 47 bears the N6-acetyllysine; alternate mark. N6-succinyllysine; alternate is present on lysine 47. Ca(2+) contacts are provided by aspartate 61, asparagine 63, aspartate 65, glutamate 67, and glutamate 72.

Belongs to the S-100 family. Homodimer; head to tail assembly of 2 subunits. Interacts with CACYBP in a calcium-dependent manner. Interacts with ANXA2 and ANXA11 (via N-terminus). Interacts with SUGT1. Interacts with TP53; has higher affinity for TP53 that is phosphorylated on its N-terminal domain, and lower affinity for TP53 that is phosphorylated on its C-terminal domain. Interacts with tropomyosin. Interacts with FKBP4. Interacts with PPP5C (via TPR repeats); the interaction is calcium-dependent and modulates PPP5C activity. Interacts with TPPP; this interaction inhibits TPPP dimerization.

It localises to the nucleus envelope. The protein resides in the cytoplasm. The protein localises to the cell membrane. May function as calcium sensor and modulator, contributing to cellular calcium signaling. May function by interacting with other proteins, such as TPR-containing proteins, and indirectly play a role in many physiological processes such as the reorganization of the actin cytoskeleton and in cell motility. Binds 2 calcium ions. Calcium binding is cooperative. The chain is Protein S100-A6 (S100A6) from Oryctolagus cuniculus (Rabbit).